The primary structure comprises 198 residues: dCTP deaminase (198 aa).

DCTP-binding positions include 99–104 (RSSLGR), 125–127 (TLE), and Gln-144. The Proton donor/acceptor role is filled by Glu-127.

This sequence belongs to the dCTP deaminase family. As to quaternary structure, homotrimer.

It carries out the reaction dCTP + H2O + H(+) = dUTP + NH4(+). It participates in pyrimidine metabolism; dUMP biosynthesis; dUMP from dCTP (dUTP route): step 1/2. Catalyzes the deamination of dCTP to dUTP. The polypeptide is dCTP deaminase (Rhodopirellula baltica (strain DSM 10527 / NCIMB 13988 / SH1)).